The chain runs to 337 residues: Viral cathepsin (337 aa).

The N-terminal stretch at 1 to 18 (MYLIYYYTIIAVATASIA) is a signal peptide. Residues 19–126 (NEKIFYDIDS…VTVAGPSART (108 aa)) constitute a propeptide, activation peptide. Intrachain disulfides connect Cys147-Cys188, Cys181-Cys221, and Cys276-Cys324. Residue Cys150 is part of the active site. Residues His283 and Asn303 contribute to the active site.

The protein belongs to the peptidase C1 family. In terms of processing, synthesized as an inactive proenzyme and activated by proteolytic removal of the inhibitory propeptide.

It catalyses the reaction Endopeptidase of broad specificity, hydrolyzing substrates of both cathepsin L and cathepsin B.. Its function is as follows. Cysteine protease that plays an essential role in host liquefaction to facilitate horizontal transmission of the virus. May participate in the degradation of foreign protein expressed by the baculovirus system. The sequence is that of Viral cathepsin (VCATH) from Spodoptera litura multicapsid nucleopolyhedrovirus (SpltMNPV).